Reading from the N-terminus, the 451-residue chain is MKFIDWIKPGIKLKRWIMLGGMGVLFISFALAELITKGSYYNVYYKAFYIFLIVVGAFILYISLTQGMKSIISLINKGYLNVSLDSRKLGNLIYEKRLLVKGPKIVAIGGGTGLSTMLRGLKYYTSNITAVVTVADDGGGSGALREDLGILPPGDIRNCILALSDTEPLMEDLLQYRFKDGRLKNQSFGNLFLAAMDGISTNFEEAVHKMSSVLAVTGKVLPVTLDNVVLKAKLKNGVVVEGESNIPEQAILYESPIEKIFIEPENARALHETVQAIKEADAVILGPGSLFTSVIPNLLVKDIGNALLKTKALKLYVSNIMTQPGETDNFSVSDHVNAITKHVGGKVVDYTLVNNGTVSEKLKKKYFEKTSELVKIDKNELDKIGVGIVEGNFIKIKDGFVRHDSDEIAKILVETIMDKKLFYDRKKIIEYFYLSQRLKENRKLEKENRGN.

It belongs to the gluconeogenesis factor family.

It localises to the cytoplasm. In terms of biological role, required for morphogenesis under gluconeogenic growth conditions. The chain is Putative gluconeogenesis factor from Clostridium acetobutylicum (strain ATCC 824 / DSM 792 / JCM 1419 / IAM 19013 / LMG 5710 / NBRC 13948 / NRRL B-527 / VKM B-1787 / 2291 / W).